We begin with the raw amino-acid sequence, 459 residues long: Beta-glucosidase (459 aa).

Residue glutamate 171 is the Proton donor of the active site. Glutamate 359 acts as the Nucleophile in catalysis.

It belongs to the glycosyl hydrolase 1 family.

It catalyses the reaction Hydrolysis of terminal, non-reducing beta-D-glucosyl residues with release of beta-D-glucose.. The chain is Beta-glucosidase (abg) from Agrobacterium sp. (strain ATCC 21400).